The primary structure comprises 211 residues: Ribosomal RNA small subunit methyltransferase G (211 aa).

S-adenosyl-L-methionine contacts are provided by residues Gly78, Met83, 129–130 (AE), and Arg144.

Belongs to the methyltransferase superfamily. RNA methyltransferase RsmG family.

Its subcellular location is the cytoplasm. It catalyses the reaction guanosine(527) in 16S rRNA + S-adenosyl-L-methionine = N(7)-methylguanosine(527) in 16S rRNA + S-adenosyl-L-homocysteine. Specifically methylates the N7 position of guanine in position 527 of 16S rRNA. In Pseudomonas syringae pv. tomato (strain ATCC BAA-871 / DC3000), this protein is Ribosomal RNA small subunit methyltransferase G.